The sequence spans 88 residues: Small ribosomal subunit protein bS20 (88 aa).

Belongs to the bacterial ribosomal protein bS20 family.

Binds directly to 16S ribosomal RNA. This Clostridium novyi (strain NT) protein is Small ribosomal subunit protein bS20.